A 312-amino-acid chain; its full sequence is MFENVISIKDFKREDIEFILREAEKMEPFASGEKSSSALRGKILGMMFYEPSTRTRLSFETAMKRLGGDVVGFADTGATSAVKGESLADTAMMLSAYSDAIVIRHNLEGAARYISDVVDVPVINAGDGAGQHPTQTLLDLYTMKRFFGRIGSLRVALVGDLKYGRTVHSLAYALAVFGASMSFVSPPVLRMPDNIIHDLRRAGVEVKETERLDDVIDEVDVLYVTRIQKERFPDPEEYSRIRGAYHIDGSTVADRDLIVMHPLPRIDEISPEVDSLPQAMYFRQAFYGVPVRMALLRLLISERRGSENQKIV.

Positions 54 and 55 each coordinate carbamoyl phosphate. K83 contributes to the L-aspartate binding site. Positions 104, 132, and 135 each coordinate carbamoyl phosphate. 2 residues coordinate L-aspartate: R165 and R226. Residues L263 and P264 each contribute to the carbamoyl phosphate site.

It belongs to the aspartate/ornithine carbamoyltransferase superfamily. ATCase family. As to quaternary structure, heterooligomer of catalytic and regulatory chains.

The enzyme catalyses carbamoyl phosphate + L-aspartate = N-carbamoyl-L-aspartate + phosphate + H(+). Its pathway is pyrimidine metabolism; UMP biosynthesis via de novo pathway; (S)-dihydroorotate from bicarbonate: step 2/3. In terms of biological role, catalyzes the condensation of carbamoyl phosphate and aspartate to form carbamoyl aspartate and inorganic phosphate, the committed step in the de novo pyrimidine nucleotide biosynthesis pathway. The sequence is that of Aspartate carbamoyltransferase catalytic subunit from Methanothermobacter thermautotrophicus (strain ATCC 29096 / DSM 1053 / JCM 10044 / NBRC 100330 / Delta H) (Methanobacterium thermoautotrophicum).